The following is a 447-amino-acid chain: Probable asparagine--tRNA ligase, cytoplasmic (447 aa).

This sequence belongs to the class-II aminoacyl-tRNA synthetase family.

The protein localises to the cytoplasm. The catalysed reaction is tRNA(Asn) + L-asparagine + ATP = L-asparaginyl-tRNA(Asn) + AMP + diphosphate + H(+). The polypeptide is Probable asparagine--tRNA ligase, cytoplasmic (Vairimorpha ceranae (strain BRL01) (Microsporidian parasite)).